The sequence spans 149 residues: Large ribosomal subunit protein eL19 (149 aa).

The segment at valine 45 to glycine 130 is disordered. A compositionally biased stretch (basic residues) spans asparagine 58 to alanine 85. The segment covering asparagine 90–glycine 113 has biased composition (basic and acidic residues).

This sequence belongs to the eukaryotic ribosomal protein eL19 family. As to quaternary structure, part of the 50S ribosomal subunit.

In terms of biological role, binds to the 23S rRNA. Located at the polypeptide exit tunnel on the outside of the subunit. The protein is Large ribosomal subunit protein eL19 of Haloarcula marismortui (strain ATCC 43049 / DSM 3752 / JCM 8966 / VKM B-1809) (Halobacterium marismortui).